The chain runs to 768 residues: DNA ligase 1 (768 aa).

The disordered stretch occupies residues 42–139; the sequence is VEVSQSSSDS…KEPPLESNAR (98 aa). The segment covering 52-99 has biased composition (basic and acidic residues); sequence KNVDGRSTSEKRKVESVKLVDESKHNNHDDTGTQNVERENNIVSEAKK. Low complexity predominate over residues 104–124; the sequence is GSSSSSSDAVSSNNDSGASTP. The interval 309–318 is interaction with target DNA; that stretch reads KLRLQLAEKT. An ATP-binding site is contributed by Glu414. Residue Lys416 is the N6-AMP-lysine intermediate of the active site. Residues Arg421 and Arg437 each coordinate ATP. Glu469 provides a ligand contact to Mg(2+). The interaction with target DNA stretch occupies residues 490–492; that stretch reads KRK. Glu568 contributes to the Mg(2+) binding site. ATP is bound by residues Lys573, Arg587, and Lys593.

It belongs to the ATP-dependent DNA ligase family. Requires Mg(2+) as cofactor.

The protein resides in the nucleus. The catalysed reaction is ATP + (deoxyribonucleotide)n-3'-hydroxyl + 5'-phospho-(deoxyribonucleotide)m = (deoxyribonucleotide)n+m + AMP + diphosphate.. DNA ligase that seals nicks in double-stranded DNA during DNA replication, DNA recombination and DNA repair. The sequence is that of DNA ligase 1 (cdc17) from Schizosaccharomyces pombe (strain 972 / ATCC 24843) (Fission yeast).